Here is a 79-residue protein sequence, read N- to C-terminus: MNRTNKLILGAVVLGSALLAGCSSNAKIDQLSSDVQTLSAKVDQLSNDVNAMRSDIQAAKDDAARANQRLDNKVSRVRK.

A signal peptide spans 1–21 (MNRTNKLILGAVVLGSALLAG). The N-palmitoyl cysteine moiety is linked to residue Cys22. Residue Cys22 is the site of S-diacylglycerol cysteine attachment. Repeats lie at residues 25 to 35 (NAKIDQLSSDV) and 39 to 49 (SAKVDQLSNDV). Residues 28–76 (IDQLSSDVQTLSAKVDQLSNDVNAMRSDIQAAKDDAARANQRLDNKVSR) are a coiled coil. The interval 60 to 79 (KDDAARANQRLDNKVSRVRK) is disordered. Lys79 bears the N6-murein peptidoglycan lysine mark.

This sequence belongs to the Lpp family. In terms of assembly, homotrimer.

The protein resides in the cell outer membrane. Its subcellular location is the secreted. It localises to the cell wall. Its function is as follows. A highly abundant outer membrane lipoprotein that controls the distance between the inner and outer membranes. The only protein known to be covalently linked to the peptidoglycan network (PGN). Also non-covalently binds the PGN. The link between the cell outer membrane and PGN contributes to maintenance of the structural and functional integrity of the cell envelope, and maintains the correct distance between the PGN and the outer membrane. The chain is Major outer membrane lipoprotein Lpp 2 from Salmonella paratyphi A (strain ATCC 9150 / SARB42).